The sequence spans 645 residues: MEGSSYRVVFEKGGVYLHTSARKHQDPDSLIAGVIRVVEKDSDVFLHWAPVEEAGDPTQILFKKDPSRGEPSTSEEEPTFDPGYEPDWAVISTVRPQPHLAEPRKGAEPSSSRSSWAFSVSLGELKSIRRSKPGLSWAYLVLVTQAGGSLPALHFHRGGTRALLRVLSRYLLLASSPQDSRLYLVFPQDPSALSDSFHHLQLFDQDSSNVVSRFLQDPYSTTFSSFSRVTNFFRGALQPHPEGASSPNLPPLPDDEPEPGFEVISCVELGQRPTVERAPPVTEEEWNRYVGPEGRLQNVPELKNRIFSGGLSPGLRREAWKFLLGYLSWESSAEEHKAHVRKKTDEYFRMKLQWKSVSAEQERRNSLLHGYRSLIERDVSRTDRTNKFYEGPENPGLSLLHDILLTYCMYHFDLGYVQGMSDLLSPILFVVQNEVDAFWCFCGFMELVHGNFEESQETMKRQLGQLLLLLRVLDQPLCDFLDSQDSGSLCFCFRWLLIWFKREFPFPDVLRLWEVLWTGLPGPNLHLLVACAILDMERDTLMLSGFGSNEILKHINELTMKLSVEDVLTRAEALYRQLTACPELPHNVQEILGLAQPEEPSSPSPPVSPMPLSPTRAPLPPPLPEEVIPQPDSSLEILPEDEDGA.

The segment at 57-85 (PTQILFKKDPSRGEPSTSEEEPTFDPGYE) is disordered. The tract at residues 217–309 (DPYSTTFSSF…PELKNRIFSG (93 aa)) is required for interaction with OPTN. Residues 310-520 (GLSPGLRREA…RLWEVLWTGL (211 aa)) enclose the Rab-GAP TBC domain. A disordered region spans residues 596–645 (QPEEPSSPSPPVSPMPLSPTRAPLPPPLPEEVIPQPDSSLEILPEDEDGA). Residues 600 to 624 (PSSPSPPVSPMPLSPTRAPLPPPLP) show a composition bias toward pro residues. Phosphoserine is present on residues Ser-602, Ser-604, and Ser-608. Thr-615 is subject to Phosphothreonine.

As to quaternary structure, interacts with OPTN; this interaction mediates TBC1D17 transient association with Rab8.

It is found in the cytoplasmic vesicle. The protein resides in the autophagosome. The protein localises to the cytoplasm. Its subcellular location is the recycling endosome. In terms of biological role, probable GTPase-activating protein that inhibits RAB8A/B function. Reduces Rab8 recruitment to tubules emanating from the endocytic recycling compartment (ERC) and inhibits Rab8-mediated endocytic trafficking, such as that of transferrin receptor (TfR). Involved in regulation of autophagy. The sequence is that of TBC1 domain family member 17 (Tbc1d17) from Mus musculus (Mouse).